We begin with the raw amino-acid sequence, 263 residues long: Small ribosomal subunit protein eS4, Y isoform 1 (263 aa).

Residues 42 to 104 (LPLIIFLRNR…TGEHFRLVYD (63 aa)) form the S4 RNA-binding domain.

This sequence belongs to the eukaryotic ribosomal protein eS4 family.

The chain is Small ribosomal subunit protein eS4, Y isoform 1 (RPS4Y1) from Macaca fuscata fuscata (Japanese macaque).